The primary structure comprises 708 residues: Leukotoxin translocation ATP-binding protein LktB (708 aa).

Residues 1–126 (MEANHQRNDL…ACYQGQLILV (126 aa)) form the Peptidase C39 domain. Residues 155 to 437 (FLETLIVSIF…LAQLWQDFQQ (283 aa)) form the ABC transmembrane type-1 domain. 5 consecutive transmembrane segments (helical) span residues 159–179 (LIVS…FQVV), 192–212 (LNII…LSGL), 270–290 (ALTS…MWYY), 296–316 (LVIL…SPIL), and 389–409 (VMVI…LSIG). One can recognise an ABC transporter domain in the interval 469-704 (ISFKNIRFRY…SNGLYSYLHQ (236 aa)). Position 503–510 (503–510 (GRSGSGKS)) interacts with ATP.

This sequence belongs to the ABC transporter superfamily. Protein-1 exporter (TC 3.A.1.109) family. In terms of assembly, homodimer.

The protein resides in the cell inner membrane. The enzyme catalyses ATP + H2O + proteinSide 1 = ADP + phosphate + proteinSide 2.. Its function is as follows. Part of the ABC transporter complex LktBD involved in leukotoxin export. Transmembrane domains (TMD) form a pore in the inner membrane and the ATP-binding domain (NBD) is responsible for energy generation. The chain is Leukotoxin translocation ATP-binding protein LktB (lktB) from Mannheimia haemolytica (Pasteurella haemolytica).